Consider the following 257-residue polypeptide: Pyridoxine 5'-phosphate synthase (257 aa).

Asparagine 6 is a 3-amino-2-oxopropyl phosphate binding site. 8–9 serves as a coordination point for 1-deoxy-D-xylulose 5-phosphate; sequence DH. Arginine 17 serves as a coordination point for 3-amino-2-oxopropyl phosphate. Histidine 41 serves as the catalytic Proton acceptor. Residues arginine 43 and histidine 48 each contribute to the 1-deoxy-D-xylulose 5-phosphate site. The active-site Proton acceptor is the glutamate 68. Residue threonine 98 participates in 1-deoxy-D-xylulose 5-phosphate binding. The active-site Proton donor is the histidine 210. Residues glycine 211 and 232-233 each bind 3-amino-2-oxopropyl phosphate; that span reads GQ.

This sequence belongs to the PNP synthase family. As to quaternary structure, homooctamer; tetramer of dimers.

It localises to the cytoplasm. It carries out the reaction 3-amino-2-oxopropyl phosphate + 1-deoxy-D-xylulose 5-phosphate = pyridoxine 5'-phosphate + phosphate + 2 H2O + H(+). It functions in the pathway cofactor biosynthesis; pyridoxine 5'-phosphate biosynthesis; pyridoxine 5'-phosphate from D-erythrose 4-phosphate: step 5/5. Its function is as follows. Catalyzes the complicated ring closure reaction between the two acyclic compounds 1-deoxy-D-xylulose-5-phosphate (DXP) and 3-amino-2-oxopropyl phosphate (1-amino-acetone-3-phosphate or AAP) to form pyridoxine 5'-phosphate (PNP) and inorganic phosphate. The chain is Pyridoxine 5'-phosphate synthase from Campylobacter jejuni subsp. jejuni serotype O:6 (strain 81116 / NCTC 11828).